The chain runs to 264 residues: uncharacterized protein (264 aa).

Residues 7–27 (LTLGICLVLLIILIVGYVIMT) traverse the membrane as a helical segment.

It belongs to the staphylococcal tandem lipoprotein family.

It is found in the cell membrane. This is an uncharacterized protein from Staphylococcus aureus (strain MW2).